Here is a 432-residue protein sequence, read N- to C-terminus: Adenylosuccinate synthetase (432 aa).

GTP-binding positions include 12 to 18 and 40 to 42; these read GDEGKGK and GHT. The active-site Proton acceptor is aspartate 13. Mg(2+) is bound by residues aspartate 13 and glycine 40. Residues 13–16, 38–41, threonine 130, arginine 144, glutamine 226, threonine 241, and arginine 305 contribute to the IMP site; these read DEGK and NAGH. Residue histidine 41 is the Proton donor of the active site. Residue 301–307 coordinates substrate; it reads STTGRSR. Residues arginine 307, 333-335, and 415-417 contribute to the GTP site; these read KLD and SVG.

It belongs to the adenylosuccinate synthetase family. Homodimer. The cofactor is Mg(2+).

Its subcellular location is the cytoplasm. The catalysed reaction is IMP + L-aspartate + GTP = N(6)-(1,2-dicarboxyethyl)-AMP + GDP + phosphate + 2 H(+). It participates in purine metabolism; AMP biosynthesis via de novo pathway; AMP from IMP: step 1/2. Plays an important role in the de novo pathway of purine nucleotide biosynthesis. Catalyzes the first committed step in the biosynthesis of AMP from IMP. The protein is Adenylosuccinate synthetase of Bdellovibrio bacteriovorus (strain ATCC 15356 / DSM 50701 / NCIMB 9529 / HD100).